A 375-amino-acid polypeptide reads, in one-letter code: MKLVCRQNELNTSLSLVSRAVPSRPNHPVLANVLLAADAGTQRLSLTAFDLSLGIQTSFAAQVERSGAITLPAKLLNDIVSRLPNDSDVTLEDNDAAATLSVGSGQYQMRGISADEFPELPLVQSQEALQLSASALIEGLRGTLFATSGDETKQILTGVHLKVQPDGLEFAATDGHRLAVVKTENAAATPATEFAVTVPSRALRDLERMIAIRGSDEAIALYHDQGQTVFQWGDQYLTSRTLDGQYPNYGQLIPREFNRNVAVDRKRLLAALERIAVLADQQNNAIRLSLDPENNRLALAVDAQDVGSGQEAVPAEIIGEPLEIAFNVRYLAEGLKALNTTDIQIQLNSNTSPVVLSPLGPVKITYLVMPIQLRS.

Belongs to the beta sliding clamp family. In terms of assembly, forms a ring-shaped head-to-tail homodimer around DNA which binds and tethers DNA polymerases and other proteins to the DNA. The DNA replisome complex has a single clamp-loading complex (3 tau and 1 each of delta, delta', psi and chi subunits) which binds 3 Pol III cores (1 core on the leading strand and 2 on the lagging strand) each with a beta sliding clamp dimer. Additional proteins in the replisome are other copies of gamma, psi and chi, Ssb, DNA helicase and RNA primase.

It is found in the cytoplasm. In terms of biological role, confers DNA tethering and processivity to DNA polymerases and other proteins. Acts as a clamp, forming a ring around DNA (a reaction catalyzed by the clamp-loading complex) which diffuses in an ATP-independent manner freely and bidirectionally along dsDNA. Initially characterized for its ability to contact the catalytic subunit of DNA polymerase III (Pol III), a complex, multichain enzyme responsible for most of the replicative synthesis in bacteria; Pol III exhibits 3'-5' exonuclease proofreading activity. The beta chain is required for initiation of replication as well as for processivity of DNA replication. This Synechococcus elongatus (strain ATCC 33912 / PCC 7942 / FACHB-805) (Anacystis nidulans R2) protein is Beta sliding clamp (dnaN).